Consider the following 171-residue polypeptide: S-ribosylhomocysteine lyase (171 aa).

Residues His54, His58, and Cys128 each coordinate Fe cation.

It belongs to the LuxS family. As to quaternary structure, homodimer. Fe cation is required as a cofactor.

It catalyses the reaction S-(5-deoxy-D-ribos-5-yl)-L-homocysteine = (S)-4,5-dihydroxypentane-2,3-dione + L-homocysteine. In terms of biological role, involved in the synthesis of autoinducer 2 (AI-2) which is secreted by bacteria and is used to communicate both the cell density and the metabolic potential of the environment. The regulation of gene expression in response to changes in cell density is called quorum sensing. Catalyzes the transformation of S-ribosylhomocysteine (RHC) to homocysteine (HC) and 4,5-dihydroxy-2,3-pentadione (DPD). This is S-ribosylhomocysteine lyase from Citrobacter koseri (strain ATCC BAA-895 / CDC 4225-83 / SGSC4696).